Here is a 368-residue protein sequence, read N- to C-terminus: MEFLERTYLVNDQATKMYAFTSDRERGQKPVNKDQCPGDGPERPEAGAIYHCHNSFKATGNRSSKQVHAKWRLCAASAICFFFMVAEVVGGHVAGSLAVLTDAAHLLIDLTSFLLSLFSLWLSSRPPSKRLTFGWYRAEILGALLSVLCIWVVTGVLVYLACERLLYPDYQIQAGIMITVSGCAVAANIVLTLILHQRHLGHNHKDAQANASVRAAFVHALGDVFQSTSVLISALIIYFKPDYKMADPVCTFISSVLALASTVMILKDFSILLMEGVPKGLSYNSVKELLLTVDGVISVHNLHIWSLTVNQVILSVHVATAASQDSQSVRTGIACALSSSFDLHSLTIQIESAADQDPSCLLCEDPQD.

At 1 to 78 the chain is on the cytoplasmic side; it reads MEFLERTYLV…AKWRLCAASA (78 aa). Zn(2+)-binding residues include H51, C52, and H53. The short motif at 51–53 is the HCH Motif; seals regulatory zinc-binding pocket element; the sequence is HCH. A helical transmembrane segment spans residues 79–99; that stretch reads ICFFFMVAEVVGGHVAGSLAV. The Lumenal, vesicle segment spans residues 100–102; sequence LTD. The helical transmembrane segment at 103 to 123 threads the bilayer; the sequence is AAHLLIDLTSFLLSLFSLWLS. Residues H105 and D109 each contribute to the Zn(2+) site. Residues 124–139 lie on the Cytoplasmic side of the membrane; it reads SRPPSKRLTFGWYRAE. The helical transmembrane segment at 140-160 threads the bilayer; sequence ILGALLSVLCIWVVTGVLVYL. At 161 to 174 the chain is on the lumenal, vesicle side; sequence ACERLLYPDYQIQA. The helical transmembrane segment at 175–195 threads the bilayer; it reads GIMITVSGCAVAANIVLTLIL. The Cytoplasmic portion of the chain corresponds to 196–216; sequence HQRHLGHNHKDAQANASVRAA. Residues 217–237 traverse the membrane as a helical segment; sequence FVHALGDVFQSTSVLISALII. Zn(2+) contacts are provided by H219 and D223. Residues 238 to 245 lie on the Lumenal, vesicle side of the membrane; sequence YFKPDYKM. A helical membrane pass occupies residues 246 to 266; the sequence is ADPVCTFISSVLALASTVMIL. The Cytoplasmic segment spans residues 267 to 368; the sequence is KDFSILLMEG…SCLLCEDPQD (102 aa). The Zn(2+) site is built by H300, H317, H344, E351, C360, and C363.

Belongs to the cation diffusion facilitator (CDF) transporter (TC 2.A.4) family. SLC30A subfamily. Homodimer. In terms of tissue distribution, expressed in endocrine pancreatic islet alpha and beta cells. May be more abundant in beta cells than in alpha cells. Expressed in cubical epithelium lining thyroid follicles (at protein level). In the adrenal gland, detected in the cortex, but not in the medulla (at protein level).

Its subcellular location is the cytoplasmic vesicle. The protein resides in the secretory vesicle membrane. It localises to the cell membrane. It catalyses the reaction Zn(2+)(in) + 2 H(+)(out) = Zn(2+)(out) + 2 H(+)(in). Its function is as follows. Proton-coupled zinc ion antiporter mediating the entry of zinc into the lumen of pancreatic beta cell secretory granules, thereby regulating insulin secretion. The sequence is that of Proton-coupled zinc antiporter SLC30A8 from Rattus norvegicus (Rat).